The primary structure comprises 93 residues: U8-theraphotoxin-Hs1b (93 aa).

Residues 1–18 form the signal peptide; the sequence is MKAILLLAIFSVLTVAIC. 4 cysteine pairs are disulfide-bonded: Cys-40-Cys-54, Cys-40-Cys-81, Cys-53-Cys-66, and Cys-84-Cys-91.

It belongs to the neurotoxin 27 (Jztx-72) family. ICK-72 subfamily. In terms of tissue distribution, expressed by the venom gland.

It localises to the secreted. Its function is as follows. Probable neurotoxin with ion channel impairing activity. The sequence is that of U8-theraphotoxin-Hs1b from Cyriopagopus schmidti (Chinese bird spider).